Reading from the N-terminus, the 276-residue chain is Putative glycosyltransferase 6 domain-containing protein 1 (276 aa).

Residues 1–6 lie on the Cytoplasmic side of the membrane; that stretch reads MNSKRM. The chain crosses the membrane as a helical; Signal-anchor for type II membrane protein span at residues 7 to 23; that stretch reads LLLVLFAFSLMLVERYF. The Lumenal portion of the chain corresponds to 24-276; sequence RNHQVEELRL…NKYFYLNKPT (253 aa). N74 carries an N-linked (GlcNAc...) asparagine glycan. Substrate contacts are provided by residues 82–87, 173–175, and 195–198; these read FATGRF, AAN, and HAWW. E263 acts as the Nucleophile in catalysis.

It belongs to the glycosyltransferase 6 family. Mn(2+) serves as cofactor. In terms of tissue distribution, expressed in both healthy and inflamed gingival tissue samples at similar levels, with higher expression in the gingival connective tissue compared to gingival epithelium. Strongest expression in testis, followed by leukocytes.

Its subcellular location is the membrane. The sequence is that of Putative glycosyltransferase 6 domain-containing protein 1 (GLT6D1) from Homo sapiens (Human).